Consider the following 185-residue polypeptide: MSVLSDKSIRKLAVEQSMISPFIDKQVRDGKISYGLSSFGYDARVGDEFKIFHNVNSSIVDPKEFSSDNFVTKKSSDYIIIPPNSFALGTTIEVFKIPRDIMCIVVGKSTYARTGIIVNVTPIESEFFGTVTLEFSNTTPLPAKIYANEGVAQFLFLKGDQSPETSYADRKGKYMGQTGVTLPKV.

Residues 108 to 113 (KSTYAR), 132 to 134 (TLE), Q153, Y167, and Q177 contribute to the dCTP site. Residue E134 is the Proton donor/acceptor of the active site.

It belongs to the dCTP deaminase family. In terms of assembly, homotrimer.

The enzyme catalyses dCTP + H2O + H(+) = dUTP + NH4(+). The protein operates within pyrimidine metabolism; dUMP biosynthesis; dUMP from dCTP (dUTP route): step 1/2. Catalyzes the deamination of dCTP to dUTP. This Pelagibacter ubique (strain HTCC1062) protein is dCTP deaminase.